Here is a 388-residue protein sequence, read N- to C-terminus: Homoserine O-acetyltransferase (388 aa).

The region spanning 55-354 (PIVLIEHALT…PTGHDGFLIE (300 aa)) is the AB hydrolase-1 domain. Serine 150 functions as the Nucleophile in the catalytic mechanism. A substrate-binding site is contributed by arginine 220. Catalysis depends on residues aspartate 318 and histidine 348. Aspartate 349 is a substrate binding site.

The protein belongs to the AB hydrolase superfamily. MetX family. Homodimer.

It localises to the cytoplasm. The catalysed reaction is L-homoserine + acetyl-CoA = O-acetyl-L-homoserine + CoA. Its pathway is amino-acid biosynthesis; L-methionine biosynthesis via de novo pathway; O-acetyl-L-homoserine from L-homoserine: step 1/1. Transfers an acetyl group from acetyl-CoA to L-homoserine, forming acetyl-L-homoserine. The protein is Homoserine O-acetyltransferase of Corynebacterium urealyticum (strain ATCC 43042 / DSM 7109).